Here is a 274-residue protein sequence, read N- to C-terminus: Ribosomal RNA small subunit methyltransferase A (274 aa).

S-adenosyl-L-methionine-binding residues include H15, L17, G42, E64, D89, and N109.

It belongs to the class I-like SAM-binding methyltransferase superfamily. rRNA adenine N(6)-methyltransferase family. RsmA subfamily.

It localises to the cytoplasm. It catalyses the reaction adenosine(1518)/adenosine(1519) in 16S rRNA + 4 S-adenosyl-L-methionine = N(6)-dimethyladenosine(1518)/N(6)-dimethyladenosine(1519) in 16S rRNA + 4 S-adenosyl-L-homocysteine + 4 H(+). Specifically dimethylates two adjacent adenosines (A1518 and A1519) in the loop of a conserved hairpin near the 3'-end of 16S rRNA in the 30S particle. May play a critical role in biogenesis of 30S subunits. This chain is Ribosomal RNA small subunit methyltransferase A, found in Synechococcus sp. (strain RCC307).